The following is a 396-amino-acid chain: 8-amino-7-oxononanoate synthase (396 aa).

Residue R19 participates in substrate binding. 106-107 (GY) is a binding site for pyridoxal 5'-phosphate. A substrate-binding site is contributed by H131. 3 residues coordinate pyridoxal 5'-phosphate: S176, H204, and T233. The residue at position 236 (K236) is an N6-(pyridoxal phosphate)lysine. T350 provides a ligand contact to substrate.

Belongs to the class-II pyridoxal-phosphate-dependent aminotransferase family. BioF subfamily. Homodimer. Pyridoxal 5'-phosphate is required as a cofactor.

The enzyme catalyses 6-carboxyhexanoyl-[ACP] + L-alanine + H(+) = (8S)-8-amino-7-oxononanoate + holo-[ACP] + CO2. Its pathway is cofactor biosynthesis; biotin biosynthesis. Functionally, catalyzes the decarboxylative condensation of pimeloyl-[acyl-carrier protein] and L-alanine to produce 8-amino-7-oxononanoate (AON), [acyl-carrier protein], and carbon dioxide. This Pseudomonas syringae pv. tomato (strain ATCC BAA-871 / DC3000) protein is 8-amino-7-oxononanoate synthase.